The primary structure comprises 808 residues: Protein translocase subunit SecA 2 (808 aa).

Residues Q124, 142–146, and D535 each bind ATP; that span reads GEGKT.

This sequence belongs to the SecA family. In terms of assembly, monomer and homodimer. Part of the essential Sec protein translocation apparatus which comprises SecA, SecYEG and auxiliary proteins SecDF. Other proteins may also be involved.

The protein localises to the cell membrane. It is found in the cytoplasm. It catalyses the reaction ATP + H2O + cellular proteinSide 1 = ADP + phosphate + cellular proteinSide 2.. Functionally, part of the Sec protein translocase complex. Interacts with the SecYEG preprotein conducting channel. Has a central role in coupling the hydrolysis of ATP to the transfer of proteins into and across the cell membrane, serving as an ATP-driven molecular motor driving the stepwise translocation of polypeptide chains across the membrane. The chain is Protein translocase subunit SecA 2 from Mycobacterium bovis (strain BCG / Pasteur 1173P2).